Consider the following 219-residue polypeptide: Ribose-5-phosphate isomerase A (219 aa).

Substrate-binding positions include 28-31, 81-84, and 94-97; these read TGST, DGAD, and KGGG. The Proton acceptor role is filled by E103. Position 121 (K121) interacts with substrate.

The protein belongs to the ribose 5-phosphate isomerase family. Homodimer.

The enzyme catalyses aldehydo-D-ribose 5-phosphate = D-ribulose 5-phosphate. Its pathway is carbohydrate degradation; pentose phosphate pathway; D-ribose 5-phosphate from D-ribulose 5-phosphate (non-oxidative stage): step 1/1. Catalyzes the reversible conversion of ribose-5-phosphate to ribulose 5-phosphate. The chain is Ribose-5-phosphate isomerase A from Salmonella arizonae (strain ATCC BAA-731 / CDC346-86 / RSK2980).